Consider the following 458-residue polypeptide: Transcription factor PCF5 (458 aa).

Disordered regions lie at residues 1 to 103, 159 to 182, 278 to 299, and 424 to 458; these read MGDA…RGPR, GAGAGNAAAPPSSSTHPDSAENSD, MFHHQQHRHGGGGGGGNGTTQQ, and RLPARIQGDEEHNGGGGGNGDKPPPPSSVSSASHH. Over residues 65-74 the composition is skewed to gly residues; the sequence is RGGGGGGGGE. In terms of domain architecture, TCP spans 89-147; it reads RKDRHSKVCTARGPRDRRVRLSAHTAIQFYDVQDRLGYDRPSKAVDWLIKNAKDAIDKL.

As to quaternary structure, forms homodimers and heterodimers.

It is found in the nucleus. In terms of biological role, transcription activator. Binds the promoter core sequence 5'-GGNCC-3'. This Oryza sativa subsp. japonica (Rice) protein is Transcription factor PCF5 (PCF5).